The following is a 413-amino-acid chain: CinA-like protein (413 aa).

Belongs to the CinA family.

This Desulfotalea psychrophila (strain LSv54 / DSM 12343) protein is CinA-like protein.